Consider the following 500-residue polypeptide: MNDFPWLTLIVIFPISAGSFLFFLPHRGNKVTKWYTLCVCSLELLLTTYTFCYHFQLDDPLIQLVEDSKWIFFFHFDWRLGIDGLSFGPILLTGFITTLATLAAWPVTRDSRLFHFMMLAMYSGQIGSFSSQDLLLFFMMWELELIPVYLLLSMWGGKKRLYSATKFILYTAGSSIFLLIGVLGIGLYGSNEPTFNFEISAHRSYPAALEIIFYIGFLIAFAVKSPIIPLHTWLPDTHGEAHYSTCMLLAGILLKMGAYGLVRINMELLPHAHSIFAPYLIIVGAIQIVYAASTSLGQRNLKKRIAYSSVSHMGFIIIGIGSITDAGLSGALLQIISHGFIGAALFFLAGTSYDRIRLGFFDEMGGMAVAIPKIFTMFSILSMASLALPGMSGFVAELIVFFGIITSQKFLLMPKILITFVMAIGMILTPIYSLSMLRQMFYGYRLFNAPNPSFFDSGPRELFVSISILLPVIGMGIYPDFLLSLSVDKVELIVSQFFYR.

Helical transmembrane passes span 4–24 (FPWL…LFFL), 35–55 (YTLC…CYHF), 87–107 (FGPI…AWPV), 134–154 (LLLF…LLSM), 167–187 (FILY…GIGL), 208–228 (ALEI…SPII), 242–262 (HYST…YGLV), 272–292 (AHSI…VYAA), 305–325 (IAYS…SITD), 330–350 (GALL…FLAG), 364–384 (MGGM…LSMA), 386–406 (LALP…GIIT), 416–436 (ILIT…SLSM), and 462–482 (LFVS…PDFL).

The protein belongs to the complex I subunit 4 family.

It localises to the plastid. It is found in the chloroplast thylakoid membrane. The catalysed reaction is a plastoquinone + NADH + (n+1) H(+)(in) = a plastoquinol + NAD(+) + n H(+)(out). The enzyme catalyses a plastoquinone + NADPH + (n+1) H(+)(in) = a plastoquinol + NADP(+) + n H(+)(out). The polypeptide is NAD(P)H-quinone oxidoreductase chain 4, chloroplastic (Pelargonium hortorum (Common geranium)).